The sequence spans 466 residues: 20-hydroxyecdysone protein (466 aa).

The N-terminal stretch at 1-16 (MKPVALILVFLAISQA) is a signal peptide. The 1; approximate repeat unit spans residues 48 to 50 (EVK). The 16 X repeats stretch occupies residues 48-157 (EVKAEEVKPE…EIKKEATEIK (110 aa)). A 2; approximate repeat occupies 53–55 (EVK). The tract at residues 55 to 94 (KPEEVKPIAQEEKAKDLKEEVKPEIKPEIKEQPKPDIKDE) is disordered. One copy of the 3; approximate repeat lies at 58-60 (EVK). The 4; approximate repeat unit spans residues 70-72 (DLK). One copy of the 5; approximate repeat lies at 74 to 76 (EVK). One copy of the 6; approximate repeat lies at 78-80 (EIK). A 7; approximate repeat occupies 82–84 (EIK). One copy of the 8; approximate repeat lies at 90 to 92 (DIK). A 9; approximate repeat occupies 94–96 (EIK). The stretch at 98–100 (DLK) is one 10; approximate repeat. Residues 102-104 (DIK) form an 11; approximate repeat. A 12; approximate repeat occupies 106–108 (ELK). Positions 119–220 (PNAKPLELKE…QQSTTQGNFV (102 aa)) are disordered. The span at 124 to 160 (LELKEKSLEAEEKPQEIKEEVQQPEIKKEATEIKEEP) shows a compositional bias: basic and acidic residues. Residues 125–127 (ELK) form a 13; approximate repeat. A 14; approximate repeat occupies 139–141 (EIK). The stretch at 148–150 (EIK) is one 15; approximate repeat. The stretch at 155-157 (EIK) is one 16; approximate repeat. A compositionally biased stretch (low complexity) spans 170–180 (AEETVVVPAEE). The segment covering 185–194 (PVEQEQSENQ) has biased composition (polar residues). Residues 203-216 (QATQATPTQQSTTQ) are compositionally biased toward low complexity. 2 N-linked (GlcNAc...) asparagine glycosylation sites follow: Asn-294 and Asn-352. Residues 378 to 435 (RPQNAPAAAPATQATEKPAVDDKIDPANDEVGEFVPESDNELRASGENIDDSFEDAGV) are disordered. Residues 379–394 (PQNAPAAAPATQATEK) show a composition bias toward low complexity. A compositionally biased stretch (acidic residues) spans 404 to 416 (ANDEVGEFVPESD).

The protein localises to the secreted. Functionally, probably has an essential role in embryogenesis, induces morphogenesis of imaginal disks, and may participate in multimolecular aggregates. The polypeptide is 20-hydroxyecdysone protein (ImpE2) (Drosophila melanogaster (Fruit fly)).